The following is a 147-amino-acid chain: Heavy metal-dependent transcription regulator 1 (147 aa).

One can recognise an HTH merR-type domain in the interval 1–70 (MNIGQASKVV…VEQIKDLLAL (70 aa)). A DNA-binding region (H-T-H motif) is located at residues 3-22 (IGQASKVVSGVSSKMIRYYE).

The protein localises to the cytoplasm. Functionally, transcriptional regulator involved in acid tolerance. Binds copper. This Rhizobium meliloti (strain 1021) (Ensifer meliloti) protein is Heavy metal-dependent transcription regulator 1 (hmrR1).